The primary structure comprises 273 residues: ATP synthase F(1) complex subunit gamma, mitochondrial (273 aa).

Position 14 is an N6-acetyllysine (Lys14). At Lys24 the chain carries N6-succinyllysine. At Lys30 the chain carries N6-acetyllysine. Lys90 carries the post-translational modification N6-acetyllysine; alternate. An N6-succinyllysine; alternate modification is found at Lys90. Lys113 carries the N6-acetyllysine modification. Ser121 bears the Phosphoserine mark. At Lys129 the chain carries N6-acetyllysine; alternate. Lys129 carries the N6-succinyllysine; alternate modification. Lys172 carries the post-translational modification N6-acetyllysine. Position 245 is an N6-succinyllysine (Lys245).

Belongs to the ATPase gamma chain family. Component of the ATP synthase complex composed at least of ATP5F1A/subunit alpha, ATP5F1B/subunit beta, ATP5MC1/subunit c (homooctomer), MT-ATP6/subunit a, MT-ATP8/subunit 8, ATP5ME/subunit e, ATP5MF/subunit f, ATP5MG/subunit g, ATP5MK/subunit k, ATP5MJ/subunit j, ATP5F1C/subunit gamma, ATP5F1D/subunit delta, ATP5F1E/subunit epsilon, ATP5PF/subunit F6, ATP5PB/subunit b, ATP5PD/subunit d, ATP5PO/subunit OSCP. ATP synthase complex consists of a soluble F(1) head domain (subunits alpha(3) and beta(3)) - the catalytic core - and a membrane F(0) domain - the membrane proton channel (subunits c, a, 8, e, f, g, k and j). These two domains are linked by a central stalk (subunits gamma, delta, and epsilon) rotating inside the F1 region and a stationary peripheral stalk (subunits F6, b, d, and OSCP). Interacts with FLVCR2; this interaction occurs in the absence of heme and is disrupted upon heme binding.

The protein localises to the mitochondrion inner membrane. Subunit gamma, of the mitochondrial membrane ATP synthase complex (F(1)F(0) ATP synthase or Complex V) that produces ATP from ADP in the presence of a proton gradient across the membrane which is generated by electron transport complexes of the respiratory chain. ATP synthase complex consist of a soluble F(1) head domain - the catalytic core - and a membrane F(1) domain - the membrane proton channel. These two domains are linked by a central stalk rotating inside the F(1) region and a stationary peripheral stalk. During catalysis, ATP synthesis in the catalytic domain of F(1) is coupled via a rotary mechanism of the central stalk subunits to proton translocation. In vivo, can only synthesize ATP although its ATP hydrolase activity can be activated artificially in vitro. With the central stalk subunit delta, is essential for the biogenesis of F(1) catalytic part of the ATP synthase complex namely in the formation of F1 assembly intermediate. The polypeptide is ATP synthase F(1) complex subunit gamma, mitochondrial (Rattus norvegicus (Rat)).